Reading from the N-terminus, the 364-residue chain is Caffeic acid 3-O-methyltransferase (364 aa).

131 to 137 (MNQDKVL) contributes to the substrate binding site. A substrate binding region spans residues 163–181 (AFEYHGTDSRFNRVFNEGM). Residues Gly209, Asp232, Asp252, Met253, and Lys266 each contribute to the S-adenosyl-L-methionine site. His270 functions as the Proton acceptor in the catalytic mechanism.

Belongs to the class I-like SAM-binding methyltransferase superfamily. Cation-independent O-methyltransferase family. COMT subfamily. In terms of assembly, homodimer. Confined to the vascular tissues of organs undergoing lignification such as stems and roots.

The catalysed reaction is (E)-caffeate + S-adenosyl-L-methionine = (E)-ferulate + S-adenosyl-L-homocysteine + H(+). The enzyme catalyses tricetin + 2 S-adenosyl-L-methionine = 3',5'-di-O-methyltricetin + 2 S-adenosyl-L-homocysteine + 2 H(+). It catalyses the reaction luteolin + S-adenosyl-L-methionine = chrysoeriol + S-adenosyl-L-homocysteine + H(+). It carries out the reaction tricetin + S-adenosyl-L-methionine = 3'-O-methyltricetin + S-adenosyl-L-homocysteine + H(+). It functions in the pathway aromatic compound metabolism; phenylpropanoid biosynthesis. In terms of biological role, catalyzes the conversion of caffeic acid to ferulic acid and of 5-hydroxyferulic acid to sinapic acid. The resulting products may subsequently be converted to the corresponding alcohols that are incorporated into lignins. Can use the flavone tricetin (5,7,3',4',5'-pentahydroxyflavone) as the preferred substrate and give rise to its 3',5'-dimethyl derivative, tricin (3',5'-dimethoxy-5,7,4'-trihydroxyflavone), as the major product, and selgin to a lower extent. Tricin exhibits potential benefits for human health including relaxant effect on smooth muscle of intestinal tissues, antioxidant effect, antihistaminic activity, and growth inhibition of human malignant breast tumor cells and colon cancer cells. Can also use luteolin, quercetin and 5-hydroxyferulic acid (5HF) as substrates. The chain is Caffeic acid 3-O-methyltransferase from Zea mays (Maize).